Consider the following 1845-residue polypeptide: Helicase swr-1 (1845 aa).

A compositionally biased stretch (polar residues) spans 1–13; that stretch reads MTTMMTDSGTASD. Residues 1–329 are disordered; sequence MTTMMTDSGT…GASRATPRIK (329 aa). Over residues 24-38 the composition is skewed to low complexity; the sequence is NDTTTTTTTTTTPGD. Positions 63–84 are enriched in polar residues; it reads SKSYSSTHHVPAIDNTSTTNAN. Residues 98–108 are compositionally biased toward low complexity; that stretch reads SPLSSISSPLS. Over residues 168-180 the composition is skewed to basic and acidic residues; sequence PKPESPPWKKFEA. Residues 216-243 are compositionally biased toward polar residues; the sequence is AIQTSPVSNKSSASTSRKPAPASSSNSK. Composition is skewed to pro residues over residues 248–258 and 283–292; these read KMPPPPPPPKA and PRRPATPPKP. The region spanning 418-493 is the HSA domain; it reads PEAEEEPPRQ…EMEASKAKWR (76 aa). Disordered regions lie at residues 539-713 and 749-935; these read QKLQ…LFFG and ELQV…TVKT. Acidic residues predominate over residues 549 to 565; that stretch reads DGDEITDEDEDEDDEDL. Residues 574-585 show a composition bias toward basic and acidic residues; sequence GDEKESDEHSDQ. Composition is skewed to acidic residues over residues 586–608 and 663–704; these read GSDEMSDENDEDEDEDNMSSSED and NDDD…DDEP. 2 stretches are compositionally biased toward polar residues: residues 762–777 and 815–834; these read TNGTHTNEQLASSQTE and TNDSSLKYPNEIVQSENQTL. Positions 888 to 897 are enriched in low complexity; the sequence is SQSQTQSPKT. Basic and acidic residues predominate over residues 898-909; sequence TDTKPTDVDTPH. A compositionally biased stretch (polar residues) spans 922 to 933; the sequence is RQSSPQPTTPTV. In terms of domain architecture, Helicase ATP-binding spans 957–1122; sequence AGLYANNTNG…WSLLYFLAPP (166 aa). Residue 970–977 coordinates ATP; sequence DEMGLGKT. The DEAH box signature appears at 1073–1076; sequence DEAH. Positions 1510–1660 constitute a Helicase C-terminal domain; sequence ALDKLLRKLQ…DVVIQEGEFT (151 aa). Disordered regions lie at residues 1702-1724, 1751-1783, and 1816-1845; these read TTGAGGYDGTADGGGGASQPPVR, QDEADFGEAGSTRPGTPGDGLADLDGQLLGGEE, and LEGTPLELPRDRKKGRDRNRNRKGKDSRKR. Residues 1704–1718 are compositionally biased toward gly residues; it reads GAGGYDGTADGGGGA. The span at 1769-1781 shows a compositional bias: low complexity; the sequence is DGLADLDGQLLGG. The segment covering 1826 to 1845 has biased composition (basic residues); that stretch reads DRKKGRDRNRNRKGKDSRKR.

It belongs to the SNF2/RAD54 helicase family. SWR1 subfamily. In terms of assembly, component of the SWR1 chromatin-remodeling complex.

The protein resides in the nucleus. It catalyses the reaction ATP + H2O = ADP + phosphate + H(+). Its function is as follows. Catalytic component of the SWR1 complex which mediates the ATP-dependent exchange of histone H2A for the H2A variant H2A.Z leading to transcriptional regulation of selected genes by chromatin remodeling. This chain is Helicase swr-1 (crf1-1), found in Neurospora crassa (strain ATCC 24698 / 74-OR23-1A / CBS 708.71 / DSM 1257 / FGSC 987).